We begin with the raw amino-acid sequence, 248 residues long: UPF0736 protein BCE_1296 (248 aa).

The protein belongs to the UPF0736 family.

This Bacillus cereus (strain ATCC 10987 / NRS 248) protein is UPF0736 protein BCE_1296.